A 314-amino-acid chain; its full sequence is MSLINWFEEKRKFGGLIGAFIEKATKGYVLSEREKDRYINVDTNKGLWTRCDNCENMLYIKFLKQNKGVCEECGYHLQINSTERIELLIDRDTWIPMDEDMVAQDVLKFSDEDSYRNRISLSQKRTGLTDAVQTGIGNLNGTPVALGVMDFQSMGGSMGSVVGEKITRLIEYATQESLPLIIVCASGGARMQEGTLSSMQMAKISSVSQIHQVQKKLLYIAVLTYPTTGGVTASFGMLGDIIIAEPKAYIAFAGKRVIEQTLRQKIPDGFQVAESLFDHGLLDSIVPRNLLKGVLSEIFELYDLAPWKEKNNQV.

In terms of domain architecture, CoA carboxyltransferase N-terminal spans 47-314; the sequence is LWTRCDNCEN…APWKEKNNQV (268 aa). Zn(2+) is bound by residues Cys51, Cys54, Cys70, and Cys73. The segment at 51 to 73 adopts a C4-type zinc-finger fold; it reads CDNCENMLYIKFLKQNKGVCEEC.

This sequence belongs to the AccD/PCCB family. As to quaternary structure, acetyl-CoA carboxylase is a heterohexamer composed of biotin carboxyl carrier protein, biotin carboxylase and 2 subunits each of ACCase subunit alpha and ACCase plastid-coded subunit beta (accD). It depends on Zn(2+) as a cofactor.

It localises to the plastid. The protein localises to the chloroplast stroma. It carries out the reaction N(6)-carboxybiotinyl-L-lysyl-[protein] + acetyl-CoA = N(6)-biotinyl-L-lysyl-[protein] + malonyl-CoA. It participates in lipid metabolism; malonyl-CoA biosynthesis; malonyl-CoA from acetyl-CoA: step 1/1. Its function is as follows. Component of the acetyl coenzyme A carboxylase (ACC) complex. Biotin carboxylase (BC) catalyzes the carboxylation of biotin on its carrier protein (BCCP) and then the CO(2) group is transferred by the transcarboxylase to acetyl-CoA to form malonyl-CoA. This Angiopteris lygodiifolia (Turnip fern) protein is Acetyl-coenzyme A carboxylase carboxyl transferase subunit beta, chloroplastic.